A 352-amino-acid polypeptide reads, in one-letter code: Heat-inducible transcription repressor HrcA (352 aa).

It belongs to the HrcA family.

Functionally, negative regulator of class I heat shock genes (grpE-dnaK-dnaJ and groELS operons). Prevents heat-shock induction of these operons. In Latilactobacillus sakei subsp. sakei (strain 23K) (Lactobacillus sakei subsp. sakei), this protein is Heat-inducible transcription repressor HrcA.